The primary structure comprises 624 residues: Phosphoenolpyruvate carboxykinase [GTP] (624 aa).

Residues arginine 88 and 222 to 224 (YGG) contribute to the substrate site. 2 residues coordinate Mn(2+): lysine 231 and histidine 250. Serine 272 provides a ligand contact to substrate. A GTP-binding site is contributed by 273–278 (MCGKTS). Residue cysteine 274 is part of the active site. Aspartate 291 lines the Mn(2+) pocket. 386 to 388 (NAR) lines the substrate pocket. 2 residues coordinate GTP: arginine 388 and arginine 420.

This sequence belongs to the phosphoenolpyruvate carboxykinase [GTP] family. The cofactor is Mn(2+).

The protein localises to the cytoplasm. The enzyme catalyses oxaloacetate + GTP = phosphoenolpyruvate + GDP + CO2. Its pathway is carbohydrate biosynthesis; gluconeogenesis. Its function is as follows. Catalyzes the conversion of oxaloacetate (OAA) to phosphoenolpyruvate (PEP), the rate-limiting step in the metabolic pathway that produces glucose from lactate and other precursors derived from the citric acid cycle. The polypeptide is Phosphoenolpyruvate carboxykinase [GTP] (Pyrococcus furiosus (strain ATCC 43587 / DSM 3638 / JCM 8422 / Vc1)).